Reading from the N-terminus, the 195-residue chain is Imidazoleglycerol-phosphate dehydratase (195 aa).

It belongs to the imidazoleglycerol-phosphate dehydratase family.

It localises to the cytoplasm. The catalysed reaction is D-erythro-1-(imidazol-4-yl)glycerol 3-phosphate = 3-(imidazol-4-yl)-2-oxopropyl phosphate + H2O. It functions in the pathway amino-acid biosynthesis; L-histidine biosynthesis; L-histidine from 5-phospho-alpha-D-ribose 1-diphosphate: step 6/9. This chain is Imidazoleglycerol-phosphate dehydratase, found in Alkaliphilus metalliredigens (strain QYMF).